Here is a 142-residue protein sequence, read N- to C-terminus: Transcription antitermination protein NusB (142 aa).

Belongs to the NusB family.

In terms of biological role, involved in transcription antitermination. Required for transcription of ribosomal RNA (rRNA) genes. Binds specifically to the boxA antiterminator sequence of the ribosomal RNA (rrn) operons. This chain is Transcription antitermination protein NusB, found in Borrelia garinii subsp. bavariensis (strain ATCC BAA-2496 / DSM 23469 / PBi) (Borreliella bavariensis).